Consider the following 409-residue polypeptide: Galactosylgalactosylxylosylprotein 3-beta-glucuronosyltransferase S (409 aa).

Residues 1–45 (MSSARLLESQTSDEDNEDIERRPHQSHSRSCSNNTTPTHPPHPMV) are disordered. Over 1–53 (MSSARLLESQTSDEDNEDIERRPHQSHSRSCSNNTTPTHPPHPMVRKGGVARR) the chain is Cytoplasmic. Ser9 is subject to Phosphoserine. Residue Thr11 is modified to Phosphothreonine. Ser12 and Ser32 each carry phosphoserine. A helical; Signal-anchor for type II membrane protein transmembrane segment spans residues 54 to 73 (ICLIGGALFLLLVALCYLTL). The Lumenal portion of the chain corresponds to 74–409 (SGDTRLGGSE…RENPHSKILS (336 aa)). Residues Asn102 and Asn223 are each glycosylated (N-linked (GlcNAc...) asparagine). Position 235 (Asp235) interacts with Mn(2+). Glu318 acts as the Proton acceptor in catalysis. Asn338 is a glycosylation site (N-linked (GlcNAc...) asparagine). The segment at 389–409 (EGRNALISKNGRENPHSKILS) is disordered. The segment covering 398-409 (NGRENPHSKILS) has biased composition (basic and acidic residues).

The protein belongs to the glycosyltransferase 43 family. Mn(2+) serves as cofactor.

The protein resides in the golgi apparatus membrane. It catalyses the reaction 3-O-(beta-D-galactosyl-(1-&gt;3)-beta-D-galactosyl-(1-&gt;4)-beta-D-xylosyl)-L-seryl-[protein] + UDP-alpha-D-glucuronate = 3-O-(beta-D-GlcA-(1-&gt;3)-beta-D-Gal-(1-&gt;3)-beta-D-Gal-(1-&gt;4)-beta-D-Xyl)-L-seryl-[protein] + UDP + H(+). Its pathway is protein modification; protein glycosylation. In terms of biological role, involved in the biosynthesis of L2/HNK-1 carbohydrate epitope on both glycolipids and glycoproteins. Enzyme has a broad specificity. This chain is Galactosylgalactosylxylosylprotein 3-beta-glucuronosyltransferase S (GlcAT-S), found in Drosophila melanogaster (Fruit fly).